A 142-amino-acid polypeptide reads, in one-letter code: 2-aminomuconate deaminase (142 aa).

The protein belongs to the 2-aminomuconate deaminase family. Homotetramer.

It catalyses the reaction (2Z,4E)-2-aminomuconate + H2O = (3E)-2-oxohex-3-enedioate + NH4(+). Its activity is regulated as follows. Slightly inhibited by Pb(2+), Hg(+) and Cu(2+). In terms of biological role, involved in the modified meta-cleavage pathway for the 2-aminophenol catabolism. Only active toward 2-aminomuconic acid. This is 2-aminomuconate deaminase (amnD) from Pseudomonas sp.